The sequence spans 328 residues: MVKLAIDMMGGDNAPDIVLEAVQKAVEDFKNLEIMLFGDEKKYNLNHERIEFRHCSEKIEMEDEPVRAIKRKKDSSMVKMAEAVKSGEADGCVSAGNTGALMSVGLFIVGRIKGVARPALVVTLPTIDGKGFVFLDVGANADAKPEHLLQYAQLGDIYAQKIRGIDNPKISLLNIGTEPAKGNSLTKKSFELLNQDHSLNFVGNIEAKTLMDGDTDVVVTDGYTGNMVLKNLEGTAKSIGKMLKDTIMSSTKNKLAGAILKKDLAEFAKKMDYSEYGGSVLLGLEGTVVKAHGSSNAKAFYSAIRQAKIAGEQNIVQTMKETVGESNE.

The protein belongs to the PlsX family. As to quaternary structure, homodimer. Probably interacts with PlsY.

Its subcellular location is the cytoplasm. The catalysed reaction is a fatty acyl-[ACP] + phosphate = an acyl phosphate + holo-[ACP]. It participates in lipid metabolism; phospholipid metabolism. Catalyzes the reversible formation of acyl-phosphate (acyl-PO(4)) from acyl-[acyl-carrier-protein] (acyl-ACP). This enzyme utilizes acyl-ACP as fatty acyl donor, but not acyl-CoA. The polypeptide is Phosphate acyltransferase (Staphylococcus aureus (strain Mu3 / ATCC 700698)).